Here is a 478-residue protein sequence, read N- to C-terminus: Ninja-family protein 8 (478 aa).

Disordered regions lie at residues 1-247, 337-374, and 454-478; these read MDDD…LTPG, FTAK…EKKA, and DAPA…SAEN. Over residues 23–35 the composition is skewed to basic and acidic residues; that stretch reads KARDAPLEPKAEP. A compositionally biased stretch (polar residues) spans 169 to 179; that stretch reads ISISTDDGSTG. Positions 180 to 189 are enriched in acidic residues; it reads ENEDVAESEA. Residues 233–242 are compositionally biased toward low complexity; sequence SFSGSESSSG. Basic and acidic residues predominate over residues 339 to 358; the sequence is AKDKADQTGTKQVDDGKKPQ.

Belongs to the Ninja family.

The protein localises to the nucleus. This Zea mays (Maize) protein is Ninja-family protein 8.